The primary structure comprises 276 residues: MPVRPVLKIVKGQPTSDGAGVRLTRMLGTPEAQMFDPFLMLDCFDNDQASDYLGGFPDHPHRGFETVTYMLEGRMRHKDNTGREGVIGPGGIQWMRAGKGIVHSEMPEQDQGRMRGFQLWVNLPARLKMSAPGYQEFETDSIPVEARDGGVTVKVISGATETGTAGPIGGGAVDALYFDVALPAGTVFEEPVGDDRNAMLAVYEGKVRVAHDTVDALSGVFLGRGDTVRVEAVTDARVLLLAGRPIGEPVFWHGPFVMDTREGLMQAFDDFQRGRF.

The protein belongs to the pirin family.

The polypeptide is Pirin-like protein CC_0481 (Caulobacter vibrioides (strain ATCC 19089 / CIP 103742 / CB 15) (Caulobacter crescentus)).